Reading from the N-terminus, the 215-residue chain is MRIILLGAPGAGKGTQAQFLMNTFGIPQISTGDMLRSAIKSGSELGKKAKQVMDAGQLVSDDIIIELVKERIAEPDCQNGFLLDGFPRTIPQADAMRDNGIEIDYVLEFDVPDEIIVDRMSGRRVHPGSGRVYHVEHNPPKVEGKDDETGEDLVVRPDDQEQTVRKRLSVYHEQTEPLVEYYQKLSEEGKTEYHKIDGTQPVERVSEQLGDLLRK.

Position 10-15 (10-15 (GAGKGT)) interacts with ATP. The segment at 30–59 (STGDMLRSAIKSGSELGKKAKQVMDAGQLV) is NMP. AMP contacts are provided by residues Thr-31, Arg-36, 57–59 (QLV), 85–88 (GFPR), and Gln-92. The tract at residues 122-159 (GRRVHPGSGRVYHVEHNPPKVEGKDDETGEDLVVRPDD) is LID. Residues Arg-123 and 132–133 (VY) each bind ATP. The segment at 128–151 (GSGRVYHVEHNPPKVEGKDDETGE) is disordered. Basic and acidic residues predominate over residues 133–144 (YHVEHNPPKVEG). Residues Arg-156 and Arg-167 each coordinate AMP. The disordered stretch occupies residues 195–215 (KIDGTQPVERVSEQLGDLLRK). Gln-200 provides a ligand contact to ATP.

The protein belongs to the adenylate kinase family. Monomer.

The protein localises to the cytoplasm. It carries out the reaction AMP + ATP = 2 ADP. The protein operates within purine metabolism; AMP biosynthesis via salvage pathway; AMP from ADP: step 1/1. In terms of biological role, catalyzes the reversible transfer of the terminal phosphate group between ATP and AMP. Plays an important role in cellular energy homeostasis and in adenine nucleotide metabolism. The protein is Adenylate kinase of Idiomarina loihiensis (strain ATCC BAA-735 / DSM 15497 / L2-TR).